The sequence spans 436 residues: GTPase Der (436 aa).

EngA-type G domains lie at 4–167 (PTVA…PTEA) and 175–351 (IKFS…QSQN). Residues 10–17 (GRPNVGKS), 57–61 (DTGGI), 119–122 (NKVD), 181–188 (GRPNVGKS), 229–233 (DTAGM), and 294–297 (NKWD) contribute to the GTP site. Residues 352-436 (TRIPSAVLND…PIRLIARKRK (85 aa)) enclose the KH-like domain.

Belongs to the TRAFAC class TrmE-Era-EngA-EngB-Septin-like GTPase superfamily. EngA (Der) GTPase family. Associates with the 50S ribosomal subunit.

Functionally, GTPase that plays an essential role in the late steps of ribosome biogenesis. The protein is GTPase Der of Streptococcus mutans serotype c (strain ATCC 700610 / UA159).